Consider the following 95-residue polypeptide: Large ribosomal subunit protein bL27 (95 aa).

A propeptide spanning residues 1–9 (MLNMNLQFF) is cleaved from the precursor.

It belongs to the bacterial ribosomal protein bL27 family. In terms of processing, the N-terminus is cleaved by ribosomal processing cysteine protease Prp.

The chain is Large ribosomal subunit protein bL27 from Agathobacter rectalis (strain ATCC 33656 / DSM 3377 / JCM 17463 / KCTC 5835 / VPI 0990) (Eubacterium rectale).